The chain runs to 381 residues: Alcohol dehydrogenase-like 6 (381 aa).

Zn(2+) is bound by residues C53, S55, H72, C102, C105, C108, C116, and C179. Residues S55 and H72 each contribute to the an alcohol site. NAD(+) is bound at residue S55. Residues 204-209 (GLGTVG), D228, K233, 297-299 (LGV), F324, and R374 each bind NAD(+).

This sequence belongs to the zinc-containing alcohol dehydrogenase family. Class-III subfamily. As to quaternary structure, homodimer. Requires Zn(2+) as cofactor.

It is found in the cytoplasm. It carries out the reaction a primary alcohol + NAD(+) = an aldehyde + NADH + H(+). The enzyme catalyses a secondary alcohol + NAD(+) = a ketone + NADH + H(+). The sequence is that of Alcohol dehydrogenase-like 6 from Arabidopsis thaliana (Mouse-ear cress).